A 205-amino-acid chain; its full sequence is Outer-membrane lipoprotein carrier protein (205 aa).

Residues 1-21 form the signal peptide; sequence MRFLAVATMVVALMVPWSVRA.

Belongs to the LolA family. Monomer.

Its subcellular location is the periplasm. In terms of biological role, participates in the translocation of lipoproteins from the inner membrane to the outer membrane. Only forms a complex with a lipoprotein if the residue after the N-terminal Cys is not an aspartate (The Asp acts as a targeting signal to indicate that the lipoprotein should stay in the inner membrane). The sequence is that of Outer-membrane lipoprotein carrier protein from Methylobacillus flagellatus (strain ATCC 51484 / DSM 6875 / VKM B-1610 / KT).